Consider the following 129-residue polypeptide: Small ribosomal subunit protein uS9 (129 aa).

The disordered stretch occupies residues 97–129 (LKAQGFLTRDPRKKERKKYGRKKARKSFQFSKR). The segment covering 110–129 (KERKKYGRKKARKSFQFSKR) has biased composition (basic residues).

This sequence belongs to the universal ribosomal protein uS9 family.

This Chlamydia trachomatis serovar A (strain ATCC VR-571B / DSM 19440 / HAR-13) protein is Small ribosomal subunit protein uS9.